Reading from the N-terminus, the 292-residue chain is Protease HtpX homolog (292 aa).

2 consecutive transmembrane segments (helical) span residues 4-24 (IALF…VASL) and 38-58 (LGAL…ISLL). His-144 lines the Zn(2+) pocket. Glu-145 is an active-site residue. His-148 contributes to the Zn(2+) binding site. 2 helical membrane passes run 152-172 (GDMV…VFLS) and 199-219 (ITTI…VAWF). Glu-224 provides a ligand contact to Zn(2+).

This sequence belongs to the peptidase M48B family. The cofactor is Zn(2+).

Its subcellular location is the cell inner membrane. This Acidovorax ebreus (strain TPSY) (Diaphorobacter sp. (strain TPSY)) protein is Protease HtpX homolog.